The chain runs to 422 residues: Serine--tRNA ligase (422 aa).

Position 229-231 (229-231 (TAE)) interacts with L-serine. 260–262 (RKE) contacts ATP. Glu283 is a binding site for L-serine. ATP is bound at residue 347 to 350 (EISS). Residue Ser383 coordinates L-serine.

The protein belongs to the class-II aminoacyl-tRNA synthetase family. Type-1 seryl-tRNA synthetase subfamily. Homodimer. The tRNA molecule binds across the dimer.

Its subcellular location is the cytoplasm. The enzyme catalyses tRNA(Ser) + L-serine + ATP = L-seryl-tRNA(Ser) + AMP + diphosphate + H(+). It carries out the reaction tRNA(Sec) + L-serine + ATP = L-seryl-tRNA(Sec) + AMP + diphosphate + H(+). It participates in aminoacyl-tRNA biosynthesis; selenocysteinyl-tRNA(Sec) biosynthesis; L-seryl-tRNA(Sec) from L-serine and tRNA(Sec): step 1/1. Functionally, catalyzes the attachment of serine to tRNA(Ser). Is also able to aminoacylate tRNA(Sec) with serine, to form the misacylated tRNA L-seryl-tRNA(Sec), which will be further converted into selenocysteinyl-tRNA(Sec). The protein is Serine--tRNA ligase of Geotalea uraniireducens (strain Rf4) (Geobacter uraniireducens).